Consider the following 223-residue polypeptide: Fibronectin type III domain-containing protein 10 (223 aa).

The first 19 residues, 1 to 19 (MRAPPLLLLLAACAPPSGA), serve as a signal peptide directing secretion. Residues 20–179 (AVDPTPPGWE…FTAEPAAMQE (160 aa)) are Extracellular-facing. Residues 72 to 168 (LASAGGSLRA…VVPPELAECV (97 aa)) form the Fibronectin type-III domain. N-linked (GlcNAc...) asparagine glycans are attached at residues Asn-86 and Asn-109. Residues 180-200 (IVVAMTAVGGSICVMLVVICL) traverse the membrane as a helical segment. Residues 201 to 223 (LVAYITENLMHPTFRRPSLRRQP) are Cytoplasmic-facing.

It is found in the membrane. The sequence is that of Fibronectin type III domain-containing protein 10 (Fndc10) from Mus musculus (Mouse).